Here is a 391-residue protein sequence, read N- to C-terminus: Tumor susceptibility gene 101 protein (391 aa).

The residue at position 2 (alanine 2) is an N-acetylalanine. The region spanning 2-145 (AVSESQLKKM…GEEPPVFSRP (144 aa)) is the UEV domain. The segment at 159-163 (PPNTS) is interaction with CEP55. The disordered stretch occupies residues 195–222 (GPYPATTSSQYPSQPPVTTAGPSRDGTI). Over residues 200–215 (TTSSQYPSQPPVTTAG) the composition is skewed to polar residues. Position 221 is a phosphothreonine (threonine 221). Residues 238-317 (KLRWRMKEEM…NQSENNDIDE (80 aa)) adopt a coiled-coil conformation. Positions 321 to 324 (PTAP) match the PTAP motif motif. Positions 323 to 391 (APLYKQILNL…RKTAGLSDLY (69 aa)) constitute an SB domain.

It belongs to the ubiquitin-conjugating enzyme family. UEV subfamily. In terms of assembly, component of the ESCRT-I complex (endosomal sorting complex required for transport I) which consists of TSG101, VPS28, a VPS37 protein (VPS37A to -D) and MVB12A or MVB12B in a 1:1:1:1 stoichiometry. Interacts with VPS37A, VPS37B and VPS37C. Interacts with DMAP1. Interacts with ubiquitin. Interacts with AATF. Interacts with stathmin and GMCL. Component of an ESCRT-I complex (endosomal sorting complex required for transport I) which consists of TSG101, VPS28, VPS37A and UBAP1 in a 1:1:1:1 stoichiometry. Interacts with HGS; the interaction mediates the association with the ESCRT-0 complex. Interacts with GGA1 and GGA3. Interacts (via UEV domain) with PDCD6IP/AIP1. Interacts with VPS28, SNF8 and VPS36. Self-associates. Interacts with MVB12A; the association appears to be mediated by the TSG101-VPS37 binary subcomplex. Interacts with VPS37D. Interacts with LRSAM1. Interacts with CEP55; the interaction is required for cytokinesis. Interacts with PDCD6. Interacts with LITAF. Interacts with MGRN1. Interacts with ARRDC1; recruits TSG101 to the plasma membrane. Monoubiquitinated at multiple sites by LRSAM1 and by MGRN1. Ubiquitination inactivates it, possibly by regulating its shuttling between an active membrane-bound protein and an inactive soluble form. Ubiquitination by MGRN1 requires the presence of UBE2D1.

The protein localises to the cytoplasm. It is found in the early endosome membrane. Its subcellular location is the late endosome membrane. It localises to the cytoskeleton. The protein resides in the microtubule organizing center. The protein localises to the centrosome. It is found in the midbody. Its subcellular location is the midbody ring. It localises to the nucleus. Functionally, component of the ESCRT-I complex, a regulator of vesicular trafficking process. Binds to ubiquitinated cargo proteins and is required for the sorting of endocytic ubiquitinated cargos into multivesicular bodies (MVBs). Mediates the association between the ESCRT-0 and ESCRT-I complex. Required for completion of cytokinesis; the function requires CEP55. May be involved in cell growth and differentiation. Acts as a negative growth regulator. Required for the exosomal release of SDCBP, CD63 and syndecan. It may also play a role in the extracellular release of microvesicles that differ from the exosomes. In Rattus norvegicus (Rat), this protein is Tumor susceptibility gene 101 protein (Tsg101).